The following is a 631-amino-acid chain: tRNA uridine 5-carboxymethylaminomethyl modification enzyme MnmG (631 aa).

Residues 13 to 18, valine 125, and serine 180 each bind FAD; that span reads GGGHAG. 273–287 is an NAD(+) binding site; that stretch reads GPRYCPSIEDKVMRF. Glutamine 370 serves as a coordination point for FAD.

This sequence belongs to the MnmG family. In terms of assembly, homodimer. Heterotetramer of two MnmE and two MnmG subunits. FAD serves as cofactor.

It localises to the cytoplasm. Its function is as follows. NAD-binding protein involved in the addition of a carboxymethylaminomethyl (cmnm) group at the wobble position (U34) of certain tRNAs, forming tRNA-cmnm(5)s(2)U34. This Vibrio atlanticus (strain LGP32) (Vibrio splendidus (strain Mel32)) protein is tRNA uridine 5-carboxymethylaminomethyl modification enzyme MnmG.